Here is a 259-residue protein sequence, read N- to C-terminus: uncharacterized protein (259 aa).

The signal sequence occupies residues 1–22 (MKHSSKIIVFVSFLILTIFIGG). Residue cysteine 23 is the site of N-palmitoyl cysteine attachment. A lipid anchor (S-diacylglycerol cysteine) is attached at cysteine 23.

It belongs to the staphylococcal tandem lipoprotein family.

Its subcellular location is the cell membrane. This is an uncharacterized protein from Staphylococcus epidermidis (strain ATCC 35984 / DSM 28319 / BCRC 17069 / CCUG 31568 / BM 3577 / RP62A).